The chain runs to 285 residues: MNTTKPSPATAAELLRASPLDALDARILLAHALGWSRTQLITRADEPLDAAARARYLALQARRAAGEPIAQLTGAREFFGLEFDITPDVLIPRPETELLVETALDAIDGIASPCVLDLGTGSGAIAVSIASERPDARVWALERSVAALDVARRNARKLLDPARAGGPLRFLESDWYAALDPGLRFHVVVSNPPYIARHDPHLAEGDLRFEPRGALTDENDGLAAIRTIVAGAHAFVAPGGALWLEHGYDQAAAVRTLLDAAGFADVESRADLASIERASGGRLPG.

Residues Gly-119 to Gly-123, Glu-142, Trp-175, and Asn-191 each bind S-adenosyl-L-methionine. Asn-191–Tyr-194 is a binding site for substrate.

It belongs to the protein N5-glutamine methyltransferase family. PrmC subfamily.

It carries out the reaction L-glutaminyl-[peptide chain release factor] + S-adenosyl-L-methionine = N(5)-methyl-L-glutaminyl-[peptide chain release factor] + S-adenosyl-L-homocysteine + H(+). Functionally, methylates the class 1 translation termination release factors RF1/PrfA and RF2/PrfB on the glutamine residue of the universally conserved GGQ motif. The chain is Release factor glutamine methyltransferase from Burkholderia pseudomallei (strain K96243).